The sequence spans 790 residues: Probable quinate dehydrogenase (quinone) (790 aa).

4 helical membrane passes run 22–42, 48–68, 77–94, and 106–126; these read GSWY…LIVL, ALVY…DAGL, LMLP…WPAL, and AYGV…GMFV. Residues 171–200 form a disordered region; that stretch reads RSNGRPAAGSPGPTTPGEIANSDGNGAEDQ. Residues 174 to 187 are compositionally biased toward low complexity; it reads GRPAAGSPGPTTPG.

The protein belongs to the bacterial PQQ dehydrogenase family. Pyrroloquinoline quinone is required as a cofactor.

Its subcellular location is the cell membrane. The catalysed reaction is L-quinate + a quinone = 3-dehydroquinate + a quinol. It functions in the pathway aromatic compound metabolism; 3,4-dihydroxybenzoate biosynthesis; 3-dehydroquinate from D-quinate (PQQ route): step 1/1. In Xanthomonas campestris pv. juglandis (Xanthomonas arboricola pv. juglandis), this protein is Probable quinate dehydrogenase (quinone) (qumA).